A 41-amino-acid polypeptide reads, in one-letter code: Large ribosomal subunit protein bL36 (41 aa).

It belongs to the bacterial ribosomal protein bL36 family.

In Xylella fastidiosa (strain 9a5c), this protein is Large ribosomal subunit protein bL36.